Consider the following 142-residue polypeptide: Large ribosomal subunit protein uL13 (142 aa).

The protein belongs to the universal ribosomal protein uL13 family. As to quaternary structure, part of the 50S ribosomal subunit.

This protein is one of the early assembly proteins of the 50S ribosomal subunit, although it is not seen to bind rRNA by itself. It is important during the early stages of 50S assembly. This is Large ribosomal subunit protein uL13 from Shigella sonnei (strain Ss046).